The following is a 309-amino-acid chain: Taste receptor type 2 member 8 (309 aa).

Residues 1-7 (MFSPADN) are Extracellular-facing. The chain crosses the membrane as a helical span at residues 8 to 28 (IFIILITGEFILGILGNGYIA). Residues 29-50 (LVNWIDWIKKKKISTTDYILTN) lie on the Cytoplasmic side of the membrane. Residues 51–71 (LVISRICLISVIVVNGIVTVL) traverse the membrane as a helical segment. At 72 to 82 (YPDVYTKSKLQ) the chain is on the extracellular side. Residues 83–103 (IAISTFWTFANYLNMWFTTCL) form a helical membrane-spanning segment. The Cytoplasmic segment spans residues 104–131 (NVFYFLKIANSSHPLFLWLKQKIDMVVR). A helical transmembrane segment spans residues 132-152 (WILLGCFAISLLVSLIIAIVL). The Extracellular segment spans residues 153-184 (SRDYRFHAIAKHKRNITEMFHVSKMLYFEPLT). N-linked (GlcNAc...) asparagine glycosylation occurs at Asn167. The helical transmembrane segment at 185–205 (LFNLLAIVPFIVSLMSFFLLV) threads the bilayer. Over 206–239 (RSLQRHTKQIKLYATGGRDPSTEAHVRAIKTMTS) the chain is Cytoplasmic. A helical membrane pass occupies residues 240–260 (FIFFFFLYYITSLLVTFSYLM). Residues 261–266 (TKYKLA) are Extracellular-facing. The chain crosses the membrane as a helical span at residues 267 to 287 (MAFGEIVAILYPSGHSFILII). At 288–309 (LNNKLRQASVRMLTCIKITCVI) the chain is on the cytoplasmic side.

This sequence belongs to the G-protein coupled receptor T2R family.

It localises to the membrane. Functionally, receptor that may play a role in the perception of bitterness and is gustducin-linked. May play a role in sensing the chemical composition of the gastrointestinal content. The activity of this receptor may stimulate alpha gustducin, mediate PLC-beta-2 activation and lead to the gating of TRPM5. In Pongo pygmaeus (Bornean orangutan), this protein is Taste receptor type 2 member 8 (TAS2R8).